The sequence spans 533 residues: DELLA protein 2 (533 aa).

A compositionally biased stretch (basic and acidic residues) spans 1–12; the sequence is MKREHKLEHEDM. The segment at 1-24 is disordered; sequence MKREHKLEHEDMSSGSGKSGVCWE. The DELLA motif signature appears at 31–35; the sequence is DELLA. Residues 157 to 522 form the GRAS domain; it reads VETQEKGIRL…RPLIATSAWK (366 aa). Residues 164-218 form a leucine repeat I (LRI) region; that stretch reads IRLVHSLMACAEAVEQNNLKMAEALVKQIGYLAVSQEGAMRKVATYFAEGLARRI. Residues 166 to 203 are required for possible homodimerization; the sequence is LVHSLMACAEAVEQNNLKMAEALVKQIGYLAVSQEGAM. Positions 171 to 175 match the LxCxE motif; degenerate motif; that stretch reads MACAE. Residues 232–297 are VHIID; that stretch reads QIHFYETCPN…GGPPAFRLTG (66 aa). The short motif at 263 to 267 is the VHIID element; it reads VHVID. A leucine repeat II (LRII) region spans residues 311 to 343; that stretch reads QVGWRLAQFAQTIHVQFEYRGFVANSLADLDAS. Residues 355 to 443 form a PFYRE region; it reads VAVNSVFELH…EVYLGKQICN (89 aa). Positions 363–367 match the LXXLL motif; degenerate motif; the sequence is LHKLN. Residues 446–522 form an SAW region; it reads ACEGTDRVER…RPLIATSAWK (77 aa).

It belongs to the GRAS family. DELLA subfamily. In terms of assembly, may be a homodimer. In terms of processing, ubiquitinated. Upon GA application it is ubiquitinated, leading to its subsequent degradation.

The protein resides in the nucleus. Its function is as follows. Probable transcriptional regulator that acts as a repressor of the gibberellin (GA) signaling pathway. Probably acts by participating in large multiprotein complexes that repress transcription of GA-inducible genes. Upon GA application, it is degraded by the proteasome, allowing the GA signaling pathway. Together with DELLA1, required to enable arbuscule development during arbuscular mycorrhizal (AM) symbiosis with AM fungi (e.g. Glomus versiforme) via the regulation of RAM1 which, in turn, regulates various AM genes (e.g. NSP1, NSP2, PT4, LEC5, RAM2, EXO70I, STR and RAD1). The sequence is that of DELLA protein 2 from Medicago truncatula (Barrel medic).